We begin with the raw amino-acid sequence, 294 residues long: Indole-3-glycerol phosphate synthase (294 aa).

The protein belongs to the TrpC family.

The enzyme catalyses 1-(2-carboxyphenylamino)-1-deoxy-D-ribulose 5-phosphate + H(+) = (1S,2R)-1-C-(indol-3-yl)glycerol 3-phosphate + CO2 + H2O. The protein operates within amino-acid biosynthesis; L-tryptophan biosynthesis; L-tryptophan from chorismate: step 4/5. The protein is Indole-3-glycerol phosphate synthase of Synechococcus sp. (strain CC9902).